The sequence spans 249 residues: DNA repair protein RecO (249 aa).

Belongs to the RecO family.

Its function is as follows. Involved in DNA repair and RecF pathway recombination. The protein is DNA repair protein RecO of Exiguobacterium sp. (strain ATCC BAA-1283 / AT1b).